Consider the following 377-residue polypeptide: Phospho-N-acetylmuramoyl-pentapeptide-transferase (377 aa).

10 consecutive transmembrane segments (helical) span residues 2-22 (IQLL…TPAL), 55-75 (VAIL…SVLA), 82-102 (ITLS…VGFL), 122-142 (MVLQ…FPDA), 162-182 (LAFA…NLIA), 195-215 (LDGL…LITL), 236-256 (PMDL…FLWW), 263-283 (IFMG…FAVL), 288-308 (LLLV…ILQV), and 343-363 (FWVI…GDWL).

Belongs to the glycosyltransferase 4 family. MraY subfamily. Requires Mg(2+) as cofactor.

Its subcellular location is the cell membrane. The catalysed reaction is UDP-N-acetyl-alpha-D-muramoyl-L-alanyl-gamma-D-glutamyl-meso-2,6-diaminopimeloyl-D-alanyl-D-alanine + di-trans,octa-cis-undecaprenyl phosphate = di-trans,octa-cis-undecaprenyl diphospho-N-acetyl-alpha-D-muramoyl-L-alanyl-D-glutamyl-meso-2,6-diaminopimeloyl-D-alanyl-D-alanine + UMP. The protein operates within cell wall biogenesis; peptidoglycan biosynthesis. In terms of biological role, catalyzes the initial step of the lipid cycle reactions in the biosynthesis of the cell wall peptidoglycan: transfers peptidoglycan precursor phospho-MurNAc-pentapeptide from UDP-MurNAc-pentapeptide onto the lipid carrier undecaprenyl phosphate, yielding undecaprenyl-pyrophosphoryl-MurNAc-pentapeptide, known as lipid I. In Kocuria rhizophila (strain ATCC 9341 / DSM 348 / NBRC 103217 / DC2201), this protein is Phospho-N-acetylmuramoyl-pentapeptide-transferase.